An 85-amino-acid chain; its full sequence is Cytochrome b (85 aa).

Helical transmembrane passes span 1–8 (LTGLFLAM), 32–53 (WLIRNIHANGASFFFICIYLHI), and 68–85 (WNVGVVLLLLVMMTAFVG). Residues His38 and His52 each coordinate heme b.

It belongs to the cytochrome b family. The cytochrome bc1 complex contains 3 respiratory subunits (MT-CYB, CYC1 and UQCRFS1), 2 core proteins (UQCRC1 and UQCRC2) and probably 6 low-molecular weight proteins. Heme b serves as cofactor.

It is found in the mitochondrion inner membrane. Its function is as follows. Component of the ubiquinol-cytochrome c reductase complex (complex III or cytochrome b-c1 complex) that is part of the mitochondrial respiratory chain. The b-c1 complex mediates electron transfer from ubiquinol to cytochrome c. Contributes to the generation of a proton gradient across the mitochondrial membrane that is then used for ATP synthesis. The polypeptide is Cytochrome b (mt-cyb) (Pomoxis nigromaculatus (Black crappie)).